The chain runs to 142 residues: Translation initiation factor 2 subunit beta (142 aa).

The protein belongs to the eIF-2-beta/eIF-5 family. In terms of assembly, heterotrimer composed of an alpha, a beta and a gamma chain.

Functionally, eIF-2 functions in the early steps of protein synthesis by forming a ternary complex with GTP and initiator tRNA. In Staphylothermus marinus (strain ATCC 43588 / DSM 3639 / JCM 9404 / F1), this protein is Translation initiation factor 2 subunit beta.